Consider the following 343-residue polypeptide: Protein RecA (343 aa).

Gly-65–Thr-72 lines the ATP pocket.

This sequence belongs to the RecA family.

It is found in the cytoplasm. Can catalyze the hydrolysis of ATP in the presence of single-stranded DNA, the ATP-dependent uptake of single-stranded DNA by duplex DNA, and the ATP-dependent hybridization of homologous single-stranded DNAs. It interacts with LexA causing its activation and leading to its autocatalytic cleavage. In Campylobacter jejuni subsp. doylei (strain ATCC BAA-1458 / RM4099 / 269.97), this protein is Protein RecA.